A 206-amino-acid polypeptide reads, in one-letter code: FMN-dependent NADH:quinone oxidoreductase (206 aa).

Residues S9, 15–17, and 139–142 contribute to the FMN site; these read SVS and SRGG.

Belongs to the azoreductase type 1 family. As to quaternary structure, homodimer. Requires FMN as cofactor.

It carries out the reaction 2 a quinone + NADH + H(+) = 2 a 1,4-benzosemiquinone + NAD(+). It catalyses the reaction N,N-dimethyl-1,4-phenylenediamine + anthranilate + 2 NAD(+) = 2-(4-dimethylaminophenyl)diazenylbenzoate + 2 NADH + 2 H(+). Its function is as follows. Quinone reductase that provides resistance to thiol-specific stress caused by electrophilic quinones. In terms of biological role, also exhibits azoreductase activity. Catalyzes the reductive cleavage of the azo bond in aromatic azo compounds to the corresponding amines. The protein is FMN-dependent NADH:quinone oxidoreductase of Cupriavidus necator (strain ATCC 17699 / DSM 428 / KCTC 22496 / NCIMB 10442 / H16 / Stanier 337) (Ralstonia eutropha).